We begin with the raw amino-acid sequence, 79 residues long: Cell division protein ZapB (79 aa).

Positions 6–78 (FEKLEVKVQQ…LRALLGKMEE (73 aa)) form a coiled coil.

This sequence belongs to the ZapB family. Homodimer. The ends of the coiled-coil dimer bind to each other, forming polymers. Interacts with FtsZ.

It localises to the cytoplasm. In terms of biological role, non-essential, abundant cell division factor that is required for proper Z-ring formation. It is recruited early to the divisome by direct interaction with FtsZ, stimulating Z-ring assembly and thereby promoting cell division earlier in the cell cycle. Its recruitment to the Z-ring requires functional FtsA or ZipA. The chain is Cell division protein ZapB from Yersinia pseudotuberculosis serotype O:1b (strain IP 31758).